We begin with the raw amino-acid sequence, 205 residues long: High frequency lysogenization protein HflD homolog (205 aa).

The protein belongs to the HflD family.

The protein localises to the cytoplasm. Its subcellular location is the cell inner membrane. The protein is High frequency lysogenization protein HflD homolog of Shewanella piezotolerans (strain WP3 / JCM 13877).